The primary structure comprises 78 residues: uncharacterized protein (78 aa).

The N-terminal stretch at 1-45 (MPVIAIIAIVIIVIILNKTGVSDSLTALTLATVAALLTGGGAAGA) is a signal peptide.

The protein to E.coli YkfL.

This is an uncharacterized protein from Escherichia coli (strain K12).